Reading from the N-terminus, the 321-residue chain is Altered inheritance of mitochondria protein 18, mitochondrial (321 aa).

The transit peptide at 1–72 directs the protein to the mitochondrion; it reads MDRGRCANML…LLATSLYYRD (72 aa).

This sequence belongs to the AIM18/AIM46 family.

It localises to the mitochondrion. This is Altered inheritance of mitochondria protein 18, mitochondrial (AIM18) from Saccharomyces cerevisiae (strain AWRI1631) (Baker's yeast).